Here is a 64-residue protein sequence, read N- to C-terminus: MPKMKTHRGAAKRFKKTGTGKIKRSKAYTSHILTKKSPKRKRKLRKAGIVFKGDQRRIAQLLPY.

Basic residues-rich tracts occupy residues 1–26 (MPKM…KRSK) and 33–44 (LTKKSPKRKRKL). The interval 1-44 (MPKMKTHRGAAKRFKKTGTGKIKRSKAYTSHILTKKSPKRKRKL) is disordered.

Belongs to the bacterial ribosomal protein bL35 family.

This Alkaliphilus oremlandii (strain OhILAs) (Clostridium oremlandii (strain OhILAs)) protein is Large ribosomal subunit protein bL35.